Here is a 190-residue protein sequence, read N- to C-terminus: dTTP/UTP pyrophosphatase (190 aa).

Residue Asp-67 is the Proton acceptor of the active site.

The protein belongs to the Maf family. YhdE subfamily. Requires a divalent metal cation as cofactor.

It is found in the cytoplasm. The enzyme catalyses dTTP + H2O = dTMP + diphosphate + H(+). It carries out the reaction UTP + H2O = UMP + diphosphate + H(+). Nucleoside triphosphate pyrophosphatase that hydrolyzes dTTP and UTP. May have a dual role in cell division arrest and in preventing the incorporation of modified nucleotides into cellular nucleic acids. This is dTTP/UTP pyrophosphatase from Aquifex aeolicus (strain VF5).